Consider the following 338-residue polypeptide: Malate dehydrogenase, mitochondrial (338 aa).

Residues 1 to 24 constitute a mitochondrion transit peptide; it reads MLSALARPASAVLRRSFSTSAQNN. Residues 31–37 and D57 contribute to the NAD(+) site; that span reads GASGGIG. S33 is a glycosylation site (O-linked (GlcNAc) serine). An N6-acetyllysine; alternate mark is found at K78 and K91. N6-succinyllysine; alternate occurs at positions 78 and 91. R104 and R110 together coordinate substrate. NAD(+) is bound by residues N117 and 140 to 142; that span reads IAN. N142 lines the substrate pocket. An N6-acetyllysine modification is found at K165. Residue R176 participates in substrate binding. Position 185 is an N6-acetyllysine; alternate (K185). Position 185 is an N6-succinyllysine; alternate (K185). The active-site Proton acceptor is H200. K203 carries the post-translational modification N6-succinyllysine. An N6-acetyllysine; alternate mark is found at K215 and K239. K215 and K239 each carry N6-succinyllysine; alternate. K239 is modified (N6-malonyllysine; alternate). A Phosphoserine modification is found at S246. M251 contacts NAD(+). K269 carries the N6-succinyllysine modification. An N6-acetyllysine; alternate mark is found at K296, K301, K307, K314, and K324. K296, K301, K307, K314, and K324 each carry N6-succinyllysine; alternate. K307 carries the post-translational modification N6-malonyllysine; alternate. Phosphoserine is present on S326. N6-acetyllysine; alternate is present on residues K328, K329, and K335. At K328 the chain carries N6-succinyllysine; alternate. K329 carries the N6-malonyllysine; alternate modification. K335 bears the N6-succinyllysine; alternate mark.

The protein belongs to the LDH/MDH superfamily. MDH type 1 family. In terms of assembly, homodimer. In terms of processing, acetylation is enhanced after treatment either with trichostin A (TCA) or with nicotinamide (NAM) with the appearance of tri- and tetraacetylations. Glucose also increases acetylation.

The protein resides in the mitochondrion matrix. The enzyme catalyses (S)-malate + NAD(+) = oxaloacetate + NADH + H(+). Enzyme activity is enhanced by acetylation. The polypeptide is Malate dehydrogenase, mitochondrial (MDH2) (Pongo abelii (Sumatran orangutan)).